The primary structure comprises 48 residues: Delta-stichotoxin-Hcr1b (48 aa).

Cystine bridges form between Cys3–Cys43, Cys5–Cys33, and Cys26–Cys44.

This sequence belongs to the sea anemone sodium channel inhibitory toxin family. Type II subfamily.

The protein localises to the secreted. It localises to the nematocyst. In terms of biological role, binds to site 3 of voltage-gated sodium channels and inhibits the inactivation process. In Radianthus crispa (Leathery sea anemone), this protein is Delta-stichotoxin-Hcr1b.